A 460-amino-acid polypeptide reads, in one-letter code: Ribulose bisphosphate carboxylase (460 aa).

A substrate-binding site is contributed by Asn-112. Catalysis depends on Lys-167, which acts as the Proton acceptor. Lys-169 contacts substrate. Mg(2+) contacts are provided by Lys-192, Asp-194, and Glu-195. N6-carboxylysine is present on Lys-192. His-288 functions as the Proton acceptor in the catalytic mechanism. The substrate site is built by Arg-289, His-322, and Ser-369.

Belongs to the RuBisCO large chain family. Type II subfamily. As to quaternary structure, homodimer. Requires Mg(2+) as cofactor.

The enzyme catalyses 2 (2R)-3-phosphoglycerate + 2 H(+) = D-ribulose 1,5-bisphosphate + CO2 + H2O. It catalyses the reaction D-ribulose 1,5-bisphosphate + O2 = 2-phosphoglycolate + (2R)-3-phosphoglycerate + 2 H(+). In terms of biological role, ruBisCO catalyzes two reactions: the carboxylation of D-ribulose 1,5-bisphosphate, the primary event in carbon dioxide fixation, as well as the oxidative fragmentation of the pentose substrate. Both reactions occur simultaneously and in competition at the same active site. In Rhodopseudomonas palustris (strain BisA53), this protein is Ribulose bisphosphate carboxylase.